A 198-amino-acid chain; its full sequence is Putative peptidyl-prolyl cis-trans isomerase (198 aa).

Positions 14–195 constitute a PPIase cyclophilin-type domain; it reads NEIKVAMHTN…HDVVIESIDV (182 aa).

It belongs to the cyclophilin-type PPIase family.

The catalysed reaction is [protein]-peptidylproline (omega=180) = [protein]-peptidylproline (omega=0). Functionally, PPIases accelerate the folding of proteins. It catalyzes the cis-trans isomerization of proline imidic peptide bonds in oligopeptides. The protein is Putative peptidyl-prolyl cis-trans isomerase of Staphylococcus haemolyticus (strain JCSC1435).